A 323-amino-acid polypeptide reads, in one-letter code: Transcription factor LUX (323 aa).

Disordered regions lie at residues 1–25 (MGEE…WEMG), 53–139 (ERSR…DLSG), and 267–298 (GYHH…ESNP). Over residues 65 to 87 (SETTLSSLRGGSSGPNTSSSNNN) the composition is skewed to low complexity. The myb-like GARP DNA-binding region spans 139 to 200 (GKTLKRPRLV…HLQKYRLYLK (62 aa)).

Interacts with ELF3 and forms a complex with ELF3 and ELF4.

It is found in the nucleus. Functionally, transcription factor that is essential for the generation of the circadian clock oscillation. Is necessary for activation of CCA1 and LHY expression. Is coregulated with TOC1 and seems to be repressed by CCA1 and LHY by direct binding of these proteins to the evening element in the LUX promoter. Directly regulates the expression of PRR9, a major component of the morning transcriptional feedback circuit, by binding specific sites on PRR9 promoter. Binds to its own promoter, inducing a negative auto-regulatory feedback loop within the core clock. Binds to ELF3 and associates with ELF4 in a diurnal complex which is required for the expression of the growth-promoting transcription factors PIF4 and PIF5 and subsequent hypocotyl growth in the early evening. This Arabidopsis thaliana (Mouse-ear cress) protein is Transcription factor LUX (LUX).